A 214-amino-acid chain; its full sequence is Probable nicotinate-nucleotide adenylyltransferase (214 aa).

Belongs to the NadD family.

It catalyses the reaction nicotinate beta-D-ribonucleotide + ATP + H(+) = deamido-NAD(+) + diphosphate. It functions in the pathway cofactor biosynthesis; NAD(+) biosynthesis; deamido-NAD(+) from nicotinate D-ribonucleotide: step 1/1. Catalyzes the reversible adenylation of nicotinate mononucleotide (NaMN) to nicotinic acid adenine dinucleotide (NaAD). This chain is Probable nicotinate-nucleotide adenylyltransferase, found in Buchnera aphidicola subsp. Acyrthosiphon pisum (strain Tuc7).